Reading from the N-terminus, the 906-residue chain is DNA gyrase subunit A (906 aa).

The Topo IIA-type catalytic domain occupies Ile35–Leu524. The O-(5'-phospho-DNA)-tyrosine intermediate role is filled by Tyr123. The short motif at Gln551–Gly557 is the GyrA-box element. The interval Ser886–Thr906 is disordered.

The protein belongs to the type II topoisomerase GyrA/ParC subunit family. Heterotetramer, composed of two GyrA and two GyrB chains. In the heterotetramer, GyrA contains the active site tyrosine that forms a transient covalent intermediate with DNA, while GyrB binds cofactors and catalyzes ATP hydrolysis.

It is found in the cytoplasm. The catalysed reaction is ATP-dependent breakage, passage and rejoining of double-stranded DNA.. Its function is as follows. A type II topoisomerase that negatively supercoils closed circular double-stranded (ds) DNA in an ATP-dependent manner to modulate DNA topology and maintain chromosomes in an underwound state. Negative supercoiling favors strand separation, and DNA replication, transcription, recombination and repair, all of which involve strand separation. Also able to catalyze the interconversion of other topological isomers of dsDNA rings, including catenanes and knotted rings. Type II topoisomerases break and join 2 DNA strands simultaneously in an ATP-dependent manner. This is DNA gyrase subunit A from Rickettsia felis (strain ATCC VR-1525 / URRWXCal2) (Rickettsia azadi).